A 616-amino-acid chain; its full sequence is Dihydroxy-acid dehydratase (616 aa).

Asp81 is a binding site for Mg(2+). Cys122 is a binding site for [2Fe-2S] cluster. The Mg(2+) site is built by Asp123 and Lys124. Lys124 is modified (N6-carboxylysine). [2Fe-2S] cluster is bound at residue Cys195. Glu491 is a Mg(2+) binding site. Residue Ser517 is the Proton acceptor of the active site.

The protein belongs to the IlvD/Edd family. As to quaternary structure, homodimer. Requires [2Fe-2S] cluster as cofactor. Mg(2+) is required as a cofactor.

It carries out the reaction (2R)-2,3-dihydroxy-3-methylbutanoate = 3-methyl-2-oxobutanoate + H2O. The catalysed reaction is (2R,3R)-2,3-dihydroxy-3-methylpentanoate = (S)-3-methyl-2-oxopentanoate + H2O. It participates in amino-acid biosynthesis; L-isoleucine biosynthesis; L-isoleucine from 2-oxobutanoate: step 3/4. It functions in the pathway amino-acid biosynthesis; L-valine biosynthesis; L-valine from pyruvate: step 3/4. Its function is as follows. Functions in the biosynthesis of branched-chain amino acids. Catalyzes the dehydration of (2R,3R)-2,3-dihydroxy-3-methylpentanoate (2,3-dihydroxy-3-methylvalerate) into 2-oxo-3-methylpentanoate (2-oxo-3-methylvalerate) and of (2R)-2,3-dihydroxy-3-methylbutanoate (2,3-dihydroxyisovalerate) into 2-oxo-3-methylbutanoate (2-oxoisovalerate), the penultimate precursor to L-isoleucine and L-valine, respectively. The chain is Dihydroxy-acid dehydratase from Azoarcus sp. (strain BH72).